Reading from the N-terminus, the 872-residue chain is G-type lectin S-receptor-like serine/threonine-protein kinase At5g35370 (872 aa).

An N-terminal signal peptide occupies residues 1–26 (MKSTFLLLLLLLSLNLLFVFVSCASS). The Extracellular segment spans residues 27–443 (IEFVYPNFTA…NNNRGGSSFP (417 aa)). N-linked (GlcNAc...) asparagine glycans are attached at residues Asn-33, Asn-148, and Asn-239. Positions 35–156 (TASNLRFVDS…LNVSLWESFD (122 aa)) constitute a Bulb-type lectin domain. An EGF-like; atypical domain is found at 283–322 (PMDSCQIPFVCGKLGLCNLDNASENQSCSCPDEMRMDAGK). 2 disulfides stabilise this stretch: Cys-287–Cys-299 and Cys-293–Cys-310. Residues Asn-303, Asn-307, Asn-342, Asn-379, and Asn-389 are each glycosylated (N-linked (GlcNAc...) asparagine). Residues 338 to 423 (CEARNISYLE…HDLIGYVKLS (86 aa)) enclose the PAN domain. Cystine bridges form between Cys-372–Cys-394 and Cys-376–Cys-382. The helical transmembrane segment at 444–464 (VIALVLLPCSGFFLLIALGLL) threads the bilayer. Residues 465 to 872 (WWRRCAVMRY…IASQEVSGPR (408 aa)) are Cytoplasmic-facing. In terms of domain architecture, Protein kinase spans 515 to 814 (ENFKMQIGSG…GSIPLGNPRM (300 aa)). ATP contacts are provided by residues 521-529 (IGSGGFGSV) and Lys-543. The caM-binding stretch occupies residues 603–620 (GNGPVLEWQERFDIALGT). Asp-639 serves as the catalytic Proton acceptor. Ser-656 carries the post-translational modification Phosphoserine. Residue Thr-673 is modified to Phosphothreonine. Ser-716 and Ser-859 each carry phosphoserine. Residues 836–872 (QNGESETMVFHRRESSNSGGSRQSASYIASQEVSGPR) are disordered. The segment covering 851–861 (SNSGGSRQSAS) has biased composition (low complexity). Over residues 862 to 872 (YIASQEVSGPR) the composition is skewed to polar residues.

This sequence belongs to the protein kinase superfamily. Ser/Thr protein kinase family.

The protein resides in the cell membrane. The enzyme catalyses L-seryl-[protein] + ATP = O-phospho-L-seryl-[protein] + ADP + H(+). The catalysed reaction is L-threonyl-[protein] + ATP = O-phospho-L-threonyl-[protein] + ADP + H(+). The sequence is that of G-type lectin S-receptor-like serine/threonine-protein kinase At5g35370 from Arabidopsis thaliana (Mouse-ear cress).